The sequence spans 257 residues: Type III pantothenate kinase (257 aa).

6–13 (DAGNTNIV) contacts ATP. Substrate-binding positions include Tyr-100 and 107–110 (GADR). Asp-109 acts as the Proton acceptor in catalysis. Asp-129 is a K(+) binding site. Thr-132 contributes to the ATP binding site. Substrate is bound at residue Thr-184.

Belongs to the type III pantothenate kinase family. As to quaternary structure, homodimer. Requires NH4(+) as cofactor. The cofactor is K(+).

Its subcellular location is the cytoplasm. The enzyme catalyses (R)-pantothenate + ATP = (R)-4'-phosphopantothenate + ADP + H(+). It participates in cofactor biosynthesis; coenzyme A biosynthesis; CoA from (R)-pantothenate: step 1/5. Functionally, catalyzes the phosphorylation of pantothenate (Pan), the first step in CoA biosynthesis. The chain is Type III pantothenate kinase from Clostridium botulinum (strain Alaska E43 / Type E3).